The sequence spans 332 residues: L-lactate dehydrogenase A chain (332 aa).

Residues 29–57 and arginine 99 each bind NAD(+); that span reads GMVGMASAISVLLKDLCDELALVDVMEDK. Residues arginine 106, asparagine 138, and arginine 169 each contribute to the substrate site. Asparagine 138 is an NAD(+) binding site. Residue histidine 193 is the Proton acceptor of the active site. Threonine 248 provides a ligand contact to substrate.

Belongs to the LDH/MDH superfamily. LDH family. As to quaternary structure, homotetramer.

Its subcellular location is the cytoplasm. It carries out the reaction (S)-lactate + NAD(+) = pyruvate + NADH + H(+). The protein operates within fermentation; pyruvate fermentation to lactate; (S)-lactate from pyruvate: step 1/1. In terms of biological role, interconverts simultaneously and stereospecifically pyruvate and lactate with concomitant interconversion of NADH and NAD(+). This Fundulus heteroclitus (Killifish) protein is L-lactate dehydrogenase A chain (ldha).